A 274-amino-acid chain; its full sequence is NADPH-dependent 7-cyano-7-deazaguanine reductase (274 aa).

Residue 80 to 82 (VES) participates in substrate binding. 82–83 (SK) contacts NADPH. The Thioimide intermediate role is filled by Cys181. The active-site Proton donor is the Asp188. 220 to 221 (HE) lines the substrate pocket. An NADPH-binding site is contributed by 249–250 (RG).

This sequence belongs to the GTP cyclohydrolase I family. QueF type 2 subfamily. As to quaternary structure, homodimer.

The protein resides in the cytoplasm. It catalyses the reaction 7-aminomethyl-7-carbaguanine + 2 NADP(+) = 7-cyano-7-deazaguanine + 2 NADPH + 3 H(+). Its pathway is tRNA modification; tRNA-queuosine biosynthesis. Catalyzes the NADPH-dependent reduction of 7-cyano-7-deazaguanine (preQ0) to 7-aminomethyl-7-deazaguanine (preQ1). This Burkholderia thailandensis (strain ATCC 700388 / DSM 13276 / CCUG 48851 / CIP 106301 / E264) protein is NADPH-dependent 7-cyano-7-deazaguanine reductase.